Here is a 581-residue protein sequence, read N- to C-terminus: uncharacterized protein (581 aa).

Ser28 bears the Phosphoserine mark. Transmembrane regions (helical) follow at residues 61-81 (LVLICLVSLVTGAIANDAGSA), 100-120 (AGVLFICVGYFTYLAMPATFL), 125-145 (CVYLVCLLFGMLGSMWFALVK), 187-207 (IYILSTSVGTYLGPLAAGYIA), 214-234 (WIGWWGLIISGITFVLFLFTF), 340-360 (IFLFPAVLYSGLQWGAQDAWL), 382-402 (AVAIMNVPCIIGATIGCIYGG), 426-446 (LWLMILPCIINPIGLFMFGIG), 458-478 (VGLGFIGFGWGCAGDISMAYL), 486-506 (VLEAMVGVSVINNTFGYVFTF), and 522-542 (ISIGVLCFIFIATSFPMILCG).

It belongs to the major facilitator superfamily.

The protein resides in the cytoplasm. It localises to the cell cortex. Its subcellular location is the membrane. This is an uncharacterized protein from Schizosaccharomyces pombe (strain 972 / ATCC 24843) (Fission yeast).